Consider the following 299-residue polypeptide: Glycine--tRNA ligase alpha subunit (299 aa).

This sequence belongs to the class-II aminoacyl-tRNA synthetase family. Tetramer of two alpha and two beta subunits.

It is found in the cytoplasm. The enzyme catalyses tRNA(Gly) + glycine + ATP = glycyl-tRNA(Gly) + AMP + diphosphate. This is Glycine--tRNA ligase alpha subunit from Desulforapulum autotrophicum (strain ATCC 43914 / DSM 3382 / VKM B-1955 / HRM2) (Desulfobacterium autotrophicum).